The sequence spans 171 residues: 3-hydroxydecanoyl-[acyl-carrier-protein] dehydratase (171 aa).

His69 is a catalytic residue.

The protein belongs to the thioester dehydratase family. FabA subfamily. As to quaternary structure, homodimer.

The protein resides in the cytoplasm. It carries out the reaction a (3R)-hydroxyacyl-[ACP] = a (2E)-enoyl-[ACP] + H2O. The enzyme catalyses (3R)-hydroxydecanoyl-[ACP] = (2E)-decenoyl-[ACP] + H2O. The catalysed reaction is (2E)-decenoyl-[ACP] = (3Z)-decenoyl-[ACP]. It participates in lipid metabolism; fatty acid biosynthesis. Functionally, necessary for the introduction of cis unsaturation into fatty acids. Catalyzes the dehydration of (3R)-3-hydroxydecanoyl-ACP to E-(2)-decenoyl-ACP and then its isomerization to Z-(3)-decenoyl-ACP. Can catalyze the dehydratase reaction for beta-hydroxyacyl-ACPs with saturated chain lengths up to 16:0, being most active on intermediate chain length. This Caulobacter sp. (strain K31) protein is 3-hydroxydecanoyl-[acyl-carrier-protein] dehydratase.